The primary structure comprises 251 residues: E3 ubiquitin-protein ligase Os06g0535400 (251 aa).

The next 3 membrane-spanning stretches (helical) occupy residues valine 28 to alanine 48, leucine 102 to phenylalanine 122, and alanine 127 to serine 147. The RING-type; atypical zinc-finger motif lies at cysteine 185–arginine 227.

It localises to the membrane. It catalyses the reaction S-ubiquitinyl-[E2 ubiquitin-conjugating enzyme]-L-cysteine + [acceptor protein]-L-lysine = [E2 ubiquitin-conjugating enzyme]-L-cysteine + N(6)-ubiquitinyl-[acceptor protein]-L-lysine.. The protein operates within protein modification; protein ubiquitination. In terms of biological role, possesses E3 ubiquitin-protein ligase in vitro. This chain is E3 ubiquitin-protein ligase Os06g0535400, found in Oryza sativa subsp. japonica (Rice).